The following is a 254-amino-acid chain: H-2 class II histocompatibility antigen, I-E alpha chain (254 aa).

The first 24 residues, 1–24, serve as a signal peptide directing secretion; sequence RSRALILGVLALTTMLSLCGGEDD. The tract at residues 25-109 is alpha-1; it reads IEADHVAFYG…KDSNFTPAAN (85 aa). Over 25–216 the chain is Extracellular; the sequence is IEADHVAFYG…IPAPMSELTE (192 aa). N-linked (GlcNAc...) asparagine glycans are attached at residues Asn-103 and Asn-143. Residues 110–203 are alpha-2; that stretch reads EAPQATVFPK…GLEEPVLKHW (94 aa). One can recognise an Ig-like C1-type domain in the interval 112–204; it reads PQATVFPKSP…LEEPVLKHWE (93 aa). Cys-132 and Cys-188 are oxidised to a cystine. Residues 204-216 are connecting peptide; the sequence is EPEIPAPMSELTE. A helical membrane pass occupies residues 217–242; sequence TVVCALGLSVGLVGIVVGTIFIIQGL. Over 243-254 the chain is Cytoplasmic; sequence RSGGTSRHPGPL.

It belongs to the MHC class II family.

It localises to the membrane. In Mus musculus (Mouse), this protein is H-2 class II histocompatibility antigen, I-E alpha chain.